We begin with the raw amino-acid sequence, 601 residues long: Glutamyl-tRNA(Gln) amidotransferase subunit B, mitochondrial (601 aa).

Residues 1 to 55 (MLRPWLRQCPRATRSLACPQCHLPRPQTARRALRPLPALSLSHPIRSLQTTTTES) constitute a mitochondrion transit peptide.

The protein belongs to the GatB/GatE family. GatB subfamily. As to quaternary structure, subunit of the heterotrimeric GatCAB amidotransferase (AdT) complex, composed of A, B and C subunits.

The protein localises to the mitochondrion. It catalyses the reaction L-glutamyl-tRNA(Gln) + L-glutamine + ATP + H2O = L-glutaminyl-tRNA(Gln) + L-glutamate + ADP + phosphate + H(+). In terms of biological role, allows the formation of correctly charged Gln-tRNA(Gln) through the transamidation of misacylated Glu-tRNA(Gln) in the mitochondria. The reaction takes place in the presence of glutamine and ATP through an activated gamma-phospho-Glu-tRNA(Gln). In Aspergillus niger (strain ATCC MYA-4892 / CBS 513.88 / FGSC A1513), this protein is Glutamyl-tRNA(Gln) amidotransferase subunit B, mitochondrial.